The following is a 430-amino-acid chain: Adenylosuccinate synthetase (430 aa).

GTP is bound by residues 12-18 and 40-42; these read GDEGKGK and GHT. Asp-13 acts as the Proton acceptor in catalysis. Mg(2+) contacts are provided by Asp-13 and Gly-40. IMP contacts are provided by residues 13–16, 38–41, Thr-128, Arg-142, Gln-223, Thr-238, and Arg-302; these read DEGK and NAGH. The active-site Proton donor is the His-41. 298 to 304 provides a ligand contact to substrate; that stretch reads TTTGRPR. Residues Arg-304, 330-332, and 412-414 contribute to the GTP site; these read SID and SVG.

The protein belongs to the adenylosuccinate synthetase family. As to quaternary structure, homodimer. The cofactor is Mg(2+).

It localises to the cytoplasm. The enzyme catalyses IMP + L-aspartate + GTP = N(6)-(1,2-dicarboxyethyl)-AMP + GDP + phosphate + 2 H(+). The protein operates within purine metabolism; AMP biosynthesis via de novo pathway; AMP from IMP: step 1/2. Functionally, plays an important role in the de novo pathway of purine nucleotide biosynthesis. Catalyzes the first committed step in the biosynthesis of AMP from IMP. This is Adenylosuccinate synthetase from Streptococcus pyogenes serotype M6 (strain ATCC BAA-946 / MGAS10394).